We begin with the raw amino-acid sequence, 134 residues long: Histone H2A (134 aa).

Gly residues predominate over residues 1–10 (MTGGKSGGKA). Residues 1-24 (MTGGKSGGKASGSKNAQSRSSKAG) are disordered. N6-acetyllysine is present on residues K5 and K9. Q106 carries the post-translational modification N5-methylglutamine. Positions 115–134 (QNLLPKKTPKSGKGPGSQEL) are disordered. S131 carries the post-translational modification Phosphoserine. The [ST]-Q motif motif lies at 131–132 (SQ).

The protein belongs to the histone H2A family. In terms of assembly, the nucleosome is a histone octamer containing two molecules each of H2A, H2B, H3 and H4 assembled in one H3-H4 heterotetramer and two H2A-H2B heterodimers. The octamer wraps approximately 147 bp of DNA. In terms of processing, phosphorylated to form H2AS128ph (gamma-H2A) in response to DNA double-strand breaks (DSBs) generated by exogenous genotoxic agents and by stalled replication forks. Phosphorylation is dependent on the DNA damage checkpoint kinases mec1/ATR and tel1/ATM, spreads on either side of a detected DSB site and may mark the surrounding chromatin for recruitment of proteins required for DNA damage signaling and repair. Gamma-H2A is removed from the DNA prior to the strand invasion-primer extension step of the repair process and subsequently dephosphorylated. Dephosphorylation is necessary for efficient recovery from the DNA damage checkpoint. Post-translationally, acetylated by esa1 to form H2AK4ac and H2AK7ac.

It is found in the nucleus. It localises to the chromosome. Its function is as follows. Core component of nucleosome which plays a central role in DNA double strand break (DSB) repair. Nucleosomes wrap and compact DNA into chromatin, limiting DNA accessibility to the cellular machineries which require DNA as a template. Histones thereby play a central role in transcription regulation, DNA repair, DNA replication and chromosomal stability. DNA accessibility is regulated via a complex set of post-translational modifications of histones, also called histone code, and nucleosome remodeling. The chain is Histone H2A (httA) from Aspergillus niger (strain ATCC MYA-4892 / CBS 513.88 / FGSC A1513).